The primary structure comprises 361 residues: Riboflavin biosynthesis protein RibD (361 aa).

Residues 1–122 (MEEYYMKLAL…MMKEAGIEVR (122 aa)) enclose the CMP/dCMP-type deaminase domain. The interval 1 to 144 (MEEYYMKLAL…EKFLHFMRTG (144 aa)) is deaminase. His-49 contributes to the Zn(2+) binding site. Glu-51 (proton donor) is an active-site residue. Residues Cys-74 and Cys-83 each contribute to the Zn(2+) site. A reductase region spans residues 145–361 (LPYVTLKAAA…IKLTAKPTKE (217 aa)). NADP(+) is bound at residue Ala-153. Substrate is bound at residue Ser-167. Trp-169 is a binding site for NADP(+). Arg-183 contributes to the substrate binding site. NADP(+) contacts are provided by Thr-195 and Asp-199. Residues Leu-203 and Arg-206 each coordinate substrate. Thr-221 provides a ligand contact to NADP(+). Substrate is bound at residue Glu-290. 292–298 (GSAVHGS) contacts NADP(+).

The protein in the N-terminal section; belongs to the cytidine and deoxycytidylate deaminase family. This sequence in the C-terminal section; belongs to the HTP reductase family. In terms of assembly, homotetramer. Zn(2+) is required as a cofactor.

It catalyses the reaction 2,5-diamino-6-hydroxy-4-(5-phosphoribosylamino)-pyrimidine + H2O + H(+) = 5-amino-6-(5-phospho-D-ribosylamino)uracil + NH4(+). It carries out the reaction 5-amino-6-(5-phospho-D-ribitylamino)uracil + NADP(+) = 5-amino-6-(5-phospho-D-ribosylamino)uracil + NADPH + H(+). It participates in cofactor biosynthesis; riboflavin biosynthesis; 5-amino-6-(D-ribitylamino)uracil from GTP: step 2/4. It functions in the pathway cofactor biosynthesis; riboflavin biosynthesis; 5-amino-6-(D-ribitylamino)uracil from GTP: step 3/4. Converts 2,5-diamino-6-(ribosylamino)-4(3h)-pyrimidinone 5'-phosphate into 5-amino-6-(ribosylamino)-2,4(1h,3h)-pyrimidinedione 5'-phosphate. This Bacillus subtilis (strain 168) protein is Riboflavin biosynthesis protein RibD (ribD).